Here is a 621-residue protein sequence, read N- to C-terminus: Elongation factor 4 (621 aa).

The tr-type G domain occupies 21–203 (DLIRNICIIA…AIVKRVPPPK (183 aa)). GTP-binding positions include 33–38 (DHGKTT) and 150–153 (NKID).

The protein belongs to the TRAFAC class translation factor GTPase superfamily. Classic translation factor GTPase family. LepA subfamily.

It localises to the cell inner membrane. The catalysed reaction is GTP + H2O = GDP + phosphate + H(+). Required for accurate and efficient protein synthesis under certain stress conditions. May act as a fidelity factor of the translation reaction, by catalyzing a one-codon backward translocation of tRNAs on improperly translocated ribosomes. Back-translocation proceeds from a post-translocation (POST) complex to a pre-translocation (PRE) complex, thus giving elongation factor G a second chance to translocate the tRNAs correctly. Binds to ribosomes in a GTP-dependent manner. The protein is Elongation factor 4 of Thermotoga maritima (strain ATCC 43589 / DSM 3109 / JCM 10099 / NBRC 100826 / MSB8).